The sequence spans 470 residues: Glutamate--tRNA ligase (470 aa).

A 'HIGH' region motif is present at residues 9–19 (PSPTGYLHVGG). The short motif at 236–240 (RLSKR) is the 'KMSKS' region element. An ATP-binding site is contributed by lysine 239.

This sequence belongs to the class-I aminoacyl-tRNA synthetase family. Glutamate--tRNA ligase type 1 subfamily. As to quaternary structure, monomer.

It localises to the cytoplasm. It carries out the reaction tRNA(Glu) + L-glutamate + ATP = L-glutamyl-tRNA(Glu) + AMP + diphosphate. Functionally, catalyzes the attachment of glutamate to tRNA(Glu) in a two-step reaction: glutamate is first activated by ATP to form Glu-AMP and then transferred to the acceptor end of tRNA(Glu). The protein is Glutamate--tRNA ligase of Colwellia psychrerythraea (strain 34H / ATCC BAA-681) (Vibrio psychroerythus).